A 133-amino-acid chain; its full sequence is ATP synthase epsilon chain, chloroplastic (133 aa).

This sequence belongs to the ATPase epsilon chain family. F-type ATPases have 2 components, CF(1) - the catalytic core - and CF(0) - the membrane proton channel. CF(1) has five subunits: alpha(3), beta(3), gamma(1), delta(1), epsilon(1). CF(0) has three main subunits: a, b and c.

It is found in the plastid. The protein resides in the chloroplast thylakoid membrane. Its function is as follows. Produces ATP from ADP in the presence of a proton gradient across the membrane. This Helianthus annuus (Common sunflower) protein is ATP synthase epsilon chain, chloroplastic.